Here is a 94-residue protein sequence, read N- to C-terminus: Putative testis-specific prion protein (94 aa).

The signal sequence occupies residues 1–18; that stretch reads MQHSLVFFFAVILHLSHL. The N-linked (GlcNAc...) asparagine glycan is linked to N44.

Specifically expressed in adult testis.

It localises to the secreted. The polypeptide is Putative testis-specific prion protein (PRNT) (Homo sapiens (Human)).